Consider the following 185-residue polypeptide: Ribosome-recycling factor (185 aa).

The protein belongs to the RRF family.

Its subcellular location is the cytoplasm. In terms of biological role, responsible for the release of ribosomes from messenger RNA at the termination of protein biosynthesis. May increase the efficiency of translation by recycling ribosomes from one round of translation to another. The sequence is that of Ribosome-recycling factor from Halalkalibacterium halodurans (strain ATCC BAA-125 / DSM 18197 / FERM 7344 / JCM 9153 / C-125) (Bacillus halodurans).